The chain runs to 314 residues: Tetraacyldisaccharide 4'-kinase (314 aa).

61–68 contacts ATP; it reads IVGGSGKT.

This sequence belongs to the LpxK family.

It carries out the reaction a lipid A disaccharide + ATP = a lipid IVA + ADP + H(+). It functions in the pathway glycolipid biosynthesis; lipid IV(A) biosynthesis; lipid IV(A) from (3R)-3-hydroxytetradecanoyl-[acyl-carrier-protein] and UDP-N-acetyl-alpha-D-glucosamine: step 6/6. Its function is as follows. Transfers the gamma-phosphate of ATP to the 4'-position of a tetraacyldisaccharide 1-phosphate intermediate (termed DS-1-P) to form tetraacyldisaccharide 1,4'-bis-phosphate (lipid IVA). This chain is Tetraacyldisaccharide 4'-kinase, found in Aliarcobacter butzleri (strain RM4018) (Arcobacter butzleri).